The chain runs to 871 residues: MSELTPMMRQYLEIKADHPDAILFFRLGDFYEMFLDDAVKASRILDITLTSRNKGGDGADIPLCGVPFHSAAPYIAKLVEAGEKVAICEQVEDPKSVKGIVKREVVKVVTPGLVIDAESLSPKENNYLLSLFPGPDRWGVAYLDLSTGDFRVTETDSADAAWAEVACVNPREILMPLSFRDGGAGSERPDLAAGRMLSYVDEWVYDAEYAERMVRNHFGVASAEAAGCGSMDCGLRAVAAVLHYLQQTQKGDVRHISYLQAYRTQEFLVLDESSRRNLELNATIGDGKRRGSLLGLLDRTVTAMGGRKLKQWINYPLVSIEKINERLDAVEELVADAEFRQGVRAALDGVYDLERLNGRISLASASAKDLVALRASLVRLPSLIALLTPAASTLLARLRDGIDLLADVEELIGRGIVPDPPFVLREGGIIAQGYHSELDELRSISREGKGFIARLEAQEKARTGISSLKVRYNKVFGYYIEVTKSNLSAIPDDYIRRQTLANAERFITPELKEYEEKVLGAEDRIVELEYALFQDIRQRVAAQGERIARTADRLATLDVLAALADVAHDHRYVRPTVDEGDAIVVTGGRHPVVEALNRSERFVANDVQLDNGENQLVIITGPNMAGKSTFMRQVALIVLMAQTGSFVPADEASIGVVDRIFTRVGASDNLARGQSTFMVEMMETAAILRNATPRSLVVLDEIGRGTSTFDGVSIAWAVAEYLHDTERCAAKTLFATHYHELTELAVTRNRVKNCNVAVKEWNDQVIFLRKIVEGGASHSYGIQVARLAGLPQEVIERAKEILHNLEKGEYAEGGIPRIARGKRAGAPKPSPQLSLFDQGDDLLRRRIAGLNIAALTPLEALNILDELKRMV.

Residue Gly621 to Ser628 participates in ATP binding.

Belongs to the DNA mismatch repair MutS family.

Its function is as follows. This protein is involved in the repair of mismatches in DNA. It is possible that it carries out the mismatch recognition step. This protein has a weak ATPase activity. This Geobacter sulfurreducens (strain ATCC 51573 / DSM 12127 / PCA) protein is DNA mismatch repair protein MutS.